A 364-amino-acid chain; its full sequence is MEKAKLMKLGNGMEIPSVQELAKLTLAEIPSRYVCANENLLLPMGASVINDHETIPVIDIENLLSPEPIIGKLELDRLHFACKEWGFFQVVNHGVDASLVDSVKSEIQGFFNLSMDEKTKYEQEDGDVEGFGQGFIESEDQTLDWADIFMMFTLPLHLRKPHLFSKLPVPLRETIESYSSEMKKLSMVLFNKMEKALQVQAAEIKGMSEVFIDGTQAMRMNYYPPCPQPNLAIGLTSHSDFGGLTILLQINEVEGLQIKREGTWIAVKPLPNAFVVNVGDILEIMTNGIYHSVDHRAVVNSTNERLSIATFHDPSLESVIGPISSLITPETPALFKSGSTYGDLVEECKTRKLDGKSFLDSMRI.

The region spanning 214 to 314 (GTQAMRMNYY…RLSIATFHDP (101 aa)) is the Fe2OG dioxygenase domain. Residue Y223 coordinates 2-oxoglutarate. H238, D240, and H295 together coordinate Fe cation. 2-oxoglutarate is bound by residues R305 and S307.

The protein belongs to the iron/ascorbate-dependent oxidoreductase family. The cofactor is L-ascorbate. Requires Fe cation as cofactor. Mainly expressed in stems and leaves and, to a lower extent, in capsules and roots.

It catalyses the reaction thebaine + 2-oxoglutarate + O2 = neopinone + formaldehyde + succinate + CO2. The enzyme catalyses oripavine + 2-oxoglutarate + O2 = neomorphinone + formaldehyde + succinate + CO2. It carries out the reaction (S)-canadine + S-adenosyl-L-methionine = (S)-cis-N-methylcanadine + S-adenosyl-L-homocysteine. The catalysed reaction is thebaine + 2-oxoglutarate + O2 = 6-O-demethylthebaine + formaldehyde + succinate + CO2 + H(+). Its pathway is alkaloid biosynthesis; morphine biosynthesis. Moderate substrate inhibition. Not inhibited in vitro by acylcyclohexanediones. Non-heme dioxygenase involved in biosynthesis of morphinan-type benzylisoquinoline and opiate alkaloids natural products. Mediates the conversion of thebaine to neopinone. Also catalyzes, with lower efficiency, the 6-O-demethylation of oripavine to neomorphinone, which is converted spontaneously to morphinone. Supports dealkylation reactions such as O,O-demethylenation in the metabolism of protopine, benzo[c]phenanthridine, and rhoeadine alkaloids; cleaves a methylenedioxy bridge leaving two hydroxyl groups. Catalyzes the O-demethylation of methylenedioxy bridges on protopine alkaloids such as allocryptopine. No activity with (S)-reticuline, salutaridine, papaverine, (S)-corytuberine, (S)-scoulerine, pavine, noscapine or codeine. This chain is Thebaine 6-O-demethylase, found in Papaver somniferum (Opium poppy).